The chain runs to 406 residues: Imidazolonepropionase (406 aa).

Fe(3+)-binding residues include H72 and H74. Zn(2+) contacts are provided by H72 and H74. Residues R81, Y144, and H177 each coordinate 4-imidazolone-5-propanoate. Y144 contributes to the N-formimidoyl-L-glutamate binding site. H242 lines the Fe(3+) pocket. A Zn(2+)-binding site is contributed by H242. Q245 contacts 4-imidazolone-5-propanoate. D317 is a Fe(3+) binding site. Position 317 (D317) interacts with Zn(2+). Residues N319 and G321 each coordinate N-formimidoyl-L-glutamate. Position 322 (T322) interacts with 4-imidazolone-5-propanoate.

The protein belongs to the metallo-dependent hydrolases superfamily. HutI family. It depends on Zn(2+) as a cofactor. Fe(3+) is required as a cofactor.

The protein resides in the cytoplasm. The enzyme catalyses 4-imidazolone-5-propanoate + H2O = N-formimidoyl-L-glutamate. It participates in amino-acid degradation; L-histidine degradation into L-glutamate; N-formimidoyl-L-glutamate from L-histidine: step 3/3. In terms of biological role, catalyzes the hydrolytic cleavage of the carbon-nitrogen bond in imidazolone-5-propanoate to yield N-formimidoyl-L-glutamate. It is the third step in the universal histidine degradation pathway. This chain is Imidazolonepropionase, found in Yersinia pseudotuberculosis serotype O:1b (strain IP 31758).